The following is a 324-amino-acid chain: Myb-like DNA-binding protein myb-1 (324 aa).

2 HTH myb-type domains span residues 4–59 (MPDQ…KPGL) and 60–110 (NHGP…NRKK). The segment at 107–231 (NRKKNQLRRQ…PTGSTLRLLT (125 aa)) is disordered. Over residues 155 to 165 (RRPSSPSSFND) the composition is skewed to polar residues. The span at 166–175 (SLHHRVHESI) shows a compositional bias: basic and acidic residues. 2 stretches are compositionally biased toward low complexity: residues 183–192 (QQQQQQQQQQ) and 222–231 (PTGSTLRLLT).

Its subcellular location is the nucleus. In Neurospora crassa (strain ATCC 24698 / 74-OR23-1A / CBS 708.71 / DSM 1257 / FGSC 987), this protein is Myb-like DNA-binding protein myb-1 (rca-1).